A 261-amino-acid polypeptide reads, in one-letter code: Cytochrome c oxidase subunit 3 (261 aa).

Residues 1–15 (MTHQTHAYHMVNPSP) are Mitochondrial matrix-facing. The chain crosses the membrane as a helical span at residues 16-34 (WPLTGALSALLMTSGLTMW). At 35 to 40 (FHFNSM) the chain is on the mitochondrial intermembrane side. Residues 41–66 (TLLMIGLTTNMLTMYQWWRDVIREST) traverse the membrane as a helical segment. Over 67-72 (FQGHHT) the chain is Mitochondrial matrix. A helical transmembrane segment spans residues 73-105 (PAVQKGLRYGMILFIISEVLFFTGFFWAFYHSS). Residues 106-128 (LAPTPELGGCWPPTGIHPLNPLE) are Mitochondrial intermembrane-facing. A helical transmembrane segment spans residues 129–152 (VPLLNTSVLLASGVSITWAHHSLM). Topologically, residues 153–155 (EGD) are mitochondrial matrix. The helical transmembrane segment at 156-183 (RKHMLQALFITITLGVYFTLLQASEYYE) threads the bilayer. Over 184 to 190 (APFTISD) the chain is Mitochondrial intermembrane. A helical membrane pass occupies residues 191 to 223 (GVYGSTFFVATGFHGLHVIIGSTFLIVCFFRQL). Topologically, residues 224-232 (KFHFTSNHH) are mitochondrial matrix. A helical membrane pass occupies residues 233-256 (FGFEAAAWYWHFVDVVWLFLYVSI). The Mitochondrial intermembrane segment spans residues 257-261 (YWWGS).

This sequence belongs to the cytochrome c oxidase subunit 3 family. In terms of assembly, component of the cytochrome c oxidase (complex IV, CIV), a multisubunit enzyme composed of 14 subunits. The complex is composed of a catalytic core of 3 subunits MT-CO1, MT-CO2 and MT-CO3, encoded in the mitochondrial DNA, and 11 supernumerary subunits COX4I1 (or COX4I2), COX5A, COX5B, COX6A2 (or COX6A1), COX6B1 (or COX6B2), COX6C, COX7A1 (or COX7A2), COX7B, COX7C, COX8B and NDUFA4, which are encoded in the nuclear genome. The complex exists as a monomer or a dimer and forms supercomplexes (SCs) in the inner mitochondrial membrane with NADH-ubiquinone oxidoreductase (complex I, CI) and ubiquinol-cytochrome c oxidoreductase (cytochrome b-c1 complex, complex III, CIII), resulting in different assemblies (supercomplex SCI(1)III(2)IV(1) and megacomplex MCI(2)III(2)IV(2)).

Its subcellular location is the mitochondrion inner membrane. It catalyses the reaction 4 Fe(II)-[cytochrome c] + O2 + 8 H(+)(in) = 4 Fe(III)-[cytochrome c] + 2 H2O + 4 H(+)(out). Its function is as follows. Component of the cytochrome c oxidase, the last enzyme in the mitochondrial electron transport chain which drives oxidative phosphorylation. The respiratory chain contains 3 multisubunit complexes succinate dehydrogenase (complex II, CII), ubiquinol-cytochrome c oxidoreductase (cytochrome b-c1 complex, complex III, CIII) and cytochrome c oxidase (complex IV, CIV), that cooperate to transfer electrons derived from NADH and succinate to molecular oxygen, creating an electrochemical gradient over the inner membrane that drives transmembrane transport and the ATP synthase. Cytochrome c oxidase is the component of the respiratory chain that catalyzes the reduction of oxygen to water. Electrons originating from reduced cytochrome c in the intermembrane space (IMS) are transferred via the dinuclear copper A center (CU(A)) of subunit 2 and heme A of subunit 1 to the active site in subunit 1, a binuclear center (BNC) formed by heme A3 and copper B (CU(B)). The BNC reduces molecular oxygen to 2 water molecules using 4 electrons from cytochrome c in the IMS and 4 protons from the mitochondrial matrix. The chain is Cytochrome c oxidase subunit 3 (MT-CO3) from Bos taurus (Bovine).